A 1336-amino-acid chain; its full sequence is SH3 domain and tetratricopeptide repeat-containing protein 1 (1336 aa).

Residue M1 is modified to N-acetylmethionine. Disordered regions lie at residues 1–76 (MENL…PPCQ) and 225–266 (TGPR…SEEV). The span at 18-27 (GPVGPSGGGS) shows a compositional bias: gly residues. A compositionally biased stretch (basic and acidic residues) spans 46 to 61 (AGPEEAKAPVRGDEAP). 2 stretches are compositionally biased toward low complexity: residues 62–74 (PARVAGPAAGTPP) and 247–266 (EAAPETDSSPPSPSVSSEEV). The region spanning 305–368 (MAVGLASALA…RSSLISMQGP (64 aa)) is the SH3 domain. 8 TPR repeats span residues 560–593 (ARLCFLLGRLCSRRLKLSQARVYFEEALGALEGS), 601–634 (VAVYANLASIYRKQKNREKCAQVVPKAMALLLGT), 665–698 (ARACFLLARHHVHLKQPEEALPFLERLLLLHRDS), 786–819 (GPLYTSLAQLYSHHGCHGPAITFMTQAVEASAIA), 863–896 (GVIANMVAVALKRTGRTRQAAESYYRALRVARDL), 946–979 (THVLLQLGHLCTRQGPAQQGKGYYEWALLVAVEM), 1027–1063 (GQLLETISQLYLSLGTERAYKSALDYTKRSLGIFIDL), and 1192–1225 (RVAYHRLAALQHRLGHGELAEHFYLKALSLCNSP). A Phosphotyrosine modification is found at Y1248. One copy of the TPR 9 repeat lies at 1277–1311 (LKIYTRLATIYHNFLLDREKSLFFYQKARTFATEL).

This Homo sapiens (Human) protein is SH3 domain and tetratricopeptide repeat-containing protein 1 (SH3TC1).